The primary structure comprises 337 residues: Low-density lipoprotein receptor class A domain-containing protein 3 (337 aa).

An N-terminal signal peptide occupies residues 1–13; sequence MWLLYLILGSVES. Residues 14–169 are Extracellular-facing; the sequence is QLLPGNNHTT…NQLLYYPSIT (156 aa). Asn20 carries an N-linked (GlcNAc...) asparagine glycan. LDL-receptor class A domains are found at residues 24–61, 66–103, and 108–144; these read ECNI…KECP, RCGP…ENCT, and LCSN…EHCH. Intrachain disulfides connect Cys25/Cys38, Cys33/Cys51, Cys45/Cys60, Cys67/Cys80, Cys74/Cys93, Cys87/Cys102, Cys109/Cys121, Cys116/Cys134, and Cys128/Cys143. N-linked (GlcNAc...) asparagine glycosylation occurs at Asn101. The helical transmembrane segment at 170–190 threads the bilayer; the sequence is YTIIGSSVIFVLVVALLALVL. Over 191 to 337 the chain is Cytoplasmic; it reads HHQRKRNLMS…DDLPSTEVDV (147 aa). A compositionally biased stretch (polar residues) spans 243–253; sequence QQPVSVESPPS. The tract at residues 243-337 is disordered; the sequence is QQPVSVESPP…DDLPSTEVDV (95 aa). The segment covering 291–303 has biased composition (low complexity); that stretch reads RSRTGSSASAGST.

Belongs to the LDLR family.

It is found in the cell membrane. The sequence is that of Low-density lipoprotein receptor class A domain-containing protein 3 from Xenopus tropicalis (Western clawed frog).